The chain runs to 843 residues: Respiratory burst oxidase homolog protein B (843 aa).

A compositionally biased stretch (acidic residues) spans 1–10 (MREEEMESSS). The disordered stretch occupies residues 1–27 (MREEEMESSSEGETNKISRCKATGSDN). The Cytoplasmic portion of the chain corresponds to 1 to 297 (MREEEMESSS…SYFFLENWKR (297 aa)). EF-hand-like regions lie at residues 114 to 122 (AVEGKLPKS) and 148 to 159 (RGTTSSSITKTE). EF-hand domains are found at residues 171–206 (SFDD…SASA) and 215–250 (NVDE…VPSQ). Ca(2+)-binding residues include D184, N186, D188, R190, and E195. Residue S268 is modified to Phosphoserine. A helical membrane pass occupies residues 298–318 (IWVLTLWISICITLFTWKFLQ). Over 319–383 (YKRKTVFEVM…FDDNINFHKV (65 aa)) the chain is Extracellular. Residues 336–495 (KGSAETLKFN…LFVIVYVLLI (160 aa)) enclose the Ferric oxidoreductase domain. Residues 384–404 (VAFGIAVGIGLHAISHLACDF) traverse the membrane as a helical segment. Residues 405–439 (PRLLHAKNVEFEPMKKFFGDERPENYGWFMKGTDG) are Cytoplasmic-facing. A helical membrane pass occupies residues 440-460 (WTGVTMVVLMLVAYVLAQSWF). At 461–482 (RRNRANLPKSLKRLTGFNAFWY) the chain is on the extracellular side. Residues 483-503 (SHHLFVIVYVLLIVHGYFVYL) traverse the membrane as a helical segment. The Cytoplasmic portion of the chain corresponds to 504–511 (SKEWYHKT). Residues 512-529 (TWMYLAVPVLLYAFERLI) traverse the membrane as a helical segment. The Extracellular portion of the chain corresponds to 530–659 (RAFRPGAKAV…PYGAPAQDYR (130 aa)). The FAD-binding FR-type domain occupies 534 to 657 (PGAKAVKVLK…DGPYGAPAQD (124 aa)). Residues 660-680 (NYDVLLLVGLGIGATPLISII) form a helical membrane-spanning segment. Over 681-843 (RDVLNNIKNQ…TKFEFHKENF (163 aa)) the chain is Cytoplasmic.

The protein belongs to the RBOH (TC 5.B.1.3) family. In terms of assembly, monomer and homodimer.

The protein localises to the membrane. In terms of biological role, calcium-dependent NADPH oxidase that generates superoxide. This Arabidopsis thaliana (Mouse-ear cress) protein is Respiratory burst oxidase homolog protein B (RBOHB).